We begin with the raw amino-acid sequence, 785 residues long: Pre-tRNA-processing protein PTA1 (785 aa).

Residues 487 to 544 (INSVPSSSSSKRKSDDDDDGNDNEEVGNDGPTANSKKIKMETEPLAEEPEEPEDDDRM) are disordered. Ser-500 bears the Phosphoserine mark. 2 stretches are compositionally biased toward acidic residues: residues 502-513 (DDDDGNDNEEVG) and 530-542 (PLAE…EDDD).

Component of the cleavage and polyadenylation factor (CPF) complex, which is composed of PTI1, SYC1, SSU72, GLC7, MPE1, REF2, PFS2, PTA1, YSH1/BRR5, SWD2, CFT2/YDH1, YTH1, CFT1/YHH1, FIP1 and PAP1. Component of the APT complex, which is a subcomplex of CPF, and is composed of PTI1, SYC1, SSU72, GLC7, REF2, PTA1 and SWD2.

Its subcellular location is the nucleus. In terms of biological role, essential in pre-tRNA processing. Component of the cleavage and polyadenylation factor (CPF) complex, which plays a key role in polyadenylation-dependent pre-mRNA 3'-end formation and cooperates with cleavage factors including the CFIA complex and NAB4/CFIB. Component of the APT complex, which may be involved in polyadenylation-independent transcript 3'-end formation. The protein is Pre-tRNA-processing protein PTA1 (PTA1) of Saccharomyces cerevisiae (strain ATCC 204508 / S288c) (Baker's yeast).